Reading from the N-terminus, the 347-residue chain is MNTNDFDFELPEELIAQTPLKQRDASKLLVIDPVTREMTDTHFDHIIDQLNPRDALVMNNTRVLPARLYGEKTDTHGHVEFLLLKNTQGDQWEVLAKPAKRLKVGAKVSFGYGRLTATVTEELDHGGRIVEFSYDGIFLEVLESLGEMPLPPYIHEKLEDRDRYQTVYAKENGSAAAPTAGLHFTPELLQKIEAKGVKLVYLTLHVGLGTFRPVSVDNIDEHEMHSEFYTLSQEAADTLNSVKTAGGRIVAVGTTSIRTLETIGNKYDGQLQADSGWTNIFIKPGYQFTVVDAFSTNFHLPKSTLVMLVSAFAGREFVLEAYKHAVQERYRFFSFGDAMFVTRPSEK.

It belongs to the QueA family. In terms of assembly, monomer.

The protein localises to the cytoplasm. It carries out the reaction 7-aminomethyl-7-carbaguanosine(34) in tRNA + S-adenosyl-L-methionine = epoxyqueuosine(34) in tRNA + adenine + L-methionine + 2 H(+). It participates in tRNA modification; tRNA-queuosine biosynthesis. In terms of biological role, transfers and isomerizes the ribose moiety from AdoMet to the 7-aminomethyl group of 7-deazaguanine (preQ1-tRNA) to give epoxyqueuosine (oQ-tRNA). The sequence is that of S-adenosylmethionine:tRNA ribosyltransferase-isomerase from Streptococcus thermophilus (strain CNRZ 1066).